We begin with the raw amino-acid sequence, 879 residues long: Probable phospholipid transport protein YdbH (879 aa).

Over 1–6 the chain is Cytoplasmic; sequence MLGKYK. The chain crosses the membrane as a helical span at residues 7–29; it reads AVLALLLLIILVPLTLLMTLGLW. Topologically, residues 30-879 are periplasmic; the sequence is VPTLAGIWLP…PQGKECEEKQ (850 aa).

Interacts with the outer membrane lipoprotein YnbE.

Its subcellular location is the cell inner membrane. In terms of biological role, involved in outer membrane lipid homeostasis. Interacts with the outer membrane lipoprotein YnbE to form a functional protein bridge connecting the inner and outer membranes of the cell. Likely transports phospholipids between the inner membrane and the outer membrane. It would provide a bridge-like structure that protects phospholipids as they travel across the periplasm. Its function is as follows. TamB, YdbH and YhdP are redundant, but not equivalent, in performing an essential function for growth and maintaining lipid homeostasis in the outer membrane. Any of these three proteins is sufficient for growth. The protein is Probable phospholipid transport protein YdbH (ydbH) of Escherichia coli (strain K12).